Consider the following 28-residue polypeptide: Palustrin-1a (28 aa).

An intrachain disulfide couples cysteine 22 to cysteine 28.

As to expression, expressed by the skin glands.

It localises to the secreted. In terms of biological role, antimicrobial activity against Gram-negative bacterium E.coli. This is Palustrin-1a from Lithobates palustris (Pickerel frog).